Here is a 361-residue protein sequence, read N- to C-terminus: Peptide chain release factor 1 (361 aa).

Gln235 is subject to N5-methylglutamine.

This sequence belongs to the prokaryotic/mitochondrial release factor family. Methylated by PrmC. Methylation increases the termination efficiency of RF1.

Its subcellular location is the cytoplasm. Peptide chain release factor 1 directs the termination of translation in response to the peptide chain termination codons UAG and UAA. This is Peptide chain release factor 1 from Chlamydia felis (strain Fe/C-56) (Chlamydophila felis).